A 379-amino-acid polypeptide reads, in one-letter code: Ribosomal RNA small subunit methyltransferase H (379 aa).

S-adenosyl-L-methionine is bound by residues 71–73 (GGH), glutamate 90, aspartate 157, and histidine 164.

This sequence belongs to the methyltransferase superfamily. RsmH family.

The protein resides in the cytoplasm. It carries out the reaction cytidine(1402) in 16S rRNA + S-adenosyl-L-methionine = N(4)-methylcytidine(1402) in 16S rRNA + S-adenosyl-L-homocysteine + H(+). Its function is as follows. Specifically methylates the N4 position of cytidine in position 1402 (C1402) of 16S rRNA. This is Ribosomal RNA small subunit methyltransferase H from Treponema pallidum (strain Nichols).